A 426-amino-acid polypeptide reads, in one-letter code: Serine--tRNA ligase (426 aa).

235 to 237 (TAE) contacts L-serine. ATP is bound at residue 266–268 (RRE). E289 contacts L-serine. 353–356 (EISS) is a binding site for ATP. S389 is an L-serine binding site.

This sequence belongs to the class-II aminoacyl-tRNA synthetase family. Type-1 seryl-tRNA synthetase subfamily. Homodimer. The tRNA molecule binds across the dimer.

The protein localises to the cytoplasm. The enzyme catalyses tRNA(Ser) + L-serine + ATP = L-seryl-tRNA(Ser) + AMP + diphosphate + H(+). The catalysed reaction is tRNA(Sec) + L-serine + ATP = L-seryl-tRNA(Sec) + AMP + diphosphate + H(+). The protein operates within aminoacyl-tRNA biosynthesis; selenocysteinyl-tRNA(Sec) biosynthesis; L-seryl-tRNA(Sec) from L-serine and tRNA(Sec): step 1/1. In terms of biological role, catalyzes the attachment of serine to tRNA(Ser). Is also able to aminoacylate tRNA(Sec) with serine, to form the misacylated tRNA L-seryl-tRNA(Sec), which will be further converted into selenocysteinyl-tRNA(Sec). In Nostoc punctiforme (strain ATCC 29133 / PCC 73102), this protein is Serine--tRNA ligase.